A 64-amino-acid chain; its full sequence is Small ribosomal subunit protein eS17 (64 aa).

This sequence belongs to the eukaryotic ribosomal protein eS17 family.

The sequence is that of Small ribosomal subunit protein eS17 from Halorubrum lacusprofundi (strain ATCC 49239 / DSM 5036 / JCM 8891 / ACAM 34).